The primary structure comprises 166 residues: Protein UTR5 (166 aa).

The polypeptide is Protein UTR5 (UTR5) (Saccharomyces cerevisiae (strain ATCC 204508 / S288c) (Baker's yeast)).